The following is an 85-amino-acid chain: Sec-independent protein translocase protein TatA (85 aa).

Residues 1 to 21 (MGSMSIWHWLVVGVLVLLLFG) traverse the membrane as a helical segment. The tract at residues 39–85 (FKKGMSEEDEPTQPAEPRPTPRLQQQPPIEPNADPKLQPMQDDRPQH) is disordered.

The protein belongs to the TatA/E family. In terms of assembly, the Tat system comprises two distinct complexes: a TatABC complex, containing multiple copies of TatA, TatB and TatC subunits, and a separate TatA complex, containing only TatA subunits. Substrates initially bind to the TatABC complex, which probably triggers association of the separate TatA complex to form the active translocon.

The protein resides in the cell inner membrane. Functionally, part of the twin-arginine translocation (Tat) system that transports large folded proteins containing a characteristic twin-arginine motif in their signal peptide across membranes. TatA could form the protein-conducting channel of the Tat system. The protein is Sec-independent protein translocase protein TatA of Rhizorhabdus wittichii (strain DSM 6014 / CCUG 31198 / JCM 15750 / NBRC 105917 / EY 4224 / RW1) (Sphingomonas wittichii).